We begin with the raw amino-acid sequence, 141 residues long: Transcriptional regulator MraZ (141 aa).

2 SpoVT-AbrB domains span residues 5 to 47 (EYNH…PNEE) and 75 to 118 (AADC…SKER).

This sequence belongs to the MraZ family. In terms of assembly, forms oligomers.

Its subcellular location is the cytoplasm. The protein resides in the nucleoid. The protein is Transcriptional regulator MraZ of Lachnoclostridium phytofermentans (strain ATCC 700394 / DSM 18823 / ISDg) (Clostridium phytofermentans).